We begin with the raw amino-acid sequence, 495 residues long: ATP synthase subunit beta, chloroplastic (495 aa).

ATP is bound at residue 172–179 (GGAGVGKT).

Belongs to the ATPase alpha/beta chains family. In terms of assembly, F-type ATPases have 2 components, CF(1) - the catalytic core - and CF(0) - the membrane proton channel. CF(1) has five subunits: alpha(3), beta(3), gamma(1), delta(1), epsilon(1). CF(0) has four main subunits: a(1), b(1), b'(1) and c(9-12).

The protein resides in the plastid. Its subcellular location is the chloroplast thylakoid membrane. The enzyme catalyses ATP + H2O + 4 H(+)(in) = ADP + phosphate + 5 H(+)(out). Its function is as follows. Produces ATP from ADP in the presence of a proton gradient across the membrane. The catalytic sites are hosted primarily by the beta subunits. The chain is ATP synthase subunit beta, chloroplastic from Beaucarnea recurvata (Elephant-foot tree).